A 168-amino-acid polypeptide reads, in one-letter code: G/U mismatch-specific DNA glycosylase (168 aa).

This sequence belongs to the uracil-DNA glycosylase (UDG) superfamily. TDG/mug family. Binds DNA as a monomer.

It localises to the cytoplasm. It carries out the reaction Specifically hydrolyzes mismatched double-stranded DNA and polynucleotides, releasing free uracil.. In terms of biological role, excises ethenocytosine and uracil, which can arise by alkylation or deamination of cytosine, respectively, from the corresponding mispairs with guanine in ds-DNA. It is capable of hydrolyzing the carbon-nitrogen bond between the sugar-phosphate backbone of the DNA and the mispaired base. The complementary strand guanine functions in substrate recognition. Required for DNA damage lesion repair in stationary-phase cells. This Cronobacter sakazakii (strain ATCC BAA-894) (Enterobacter sakazakii) protein is G/U mismatch-specific DNA glycosylase.